We begin with the raw amino-acid sequence, 224 residues long: MSDNAQLTGLCDRFRGFYPVVIDVETAGFNAKTDALLEIAAITLKMDEQGWLTPDTTLHFHVDPFEGANLQPEALAFNGIDPHNPLRGAVSEYDALHAIYKMVRKGMKDSNCNRAIMVAHNATFDHSFMMAASERASLKRNPFHPFVTFDTAALSGLALGQTVLSKACITAGIDFDGNQAHSALYDTERTAELFCEIVNRWKRLGGWPLPMAESDSDSDSDSEE.

Residues 20–194 (VVIDVETAGF…YDTERTAELF (175 aa)) form the Exonuclease domain. Mg(2+) is bound by residues Asp23, Glu25, His181, and Asp186. His181 acts as the Proton donor/acceptor in catalysis.

The protein belongs to the RNase T family. As to quaternary structure, homodimer. Mg(2+) serves as cofactor.

In terms of biological role, trims short 3' overhangs of a variety of RNA species, leaving a one or two nucleotide 3' overhang. Responsible for the end-turnover of tRNA: specifically removes the terminal AMP residue from uncharged tRNA (tRNA-C-C-A). Also appears to be involved in tRNA biosynthesis. In Enterobacter sp. (strain 638), this protein is Ribonuclease T.